The chain runs to 192 residues: UPF0312 protein PputW619_0484 (192 aa).

A signal peptide spans 1-23 (MLKKTFAALALGTALLSAGQAMA).

The protein belongs to the UPF0312 family. Type 1 subfamily.

It is found in the periplasm. The chain is UPF0312 protein PputW619_0484 from Pseudomonas putida (strain W619).